Reading from the N-terminus, the 187-residue chain is BLOC-1-related complex subunit 8 homolog (187 aa).

Positions 165–187 (QSQHETANDTRQGYNDDANNDQD) are disordered.

It belongs to the BORCS8 family.

It localises to the lysosome membrane. Its function is as follows. May participate in the coupling of lysosomes to microtubule plus-end-directed kinesin motor. This Nematostella vectensis (Starlet sea anemone) protein is BLOC-1-related complex subunit 8 homolog.